Here is a 152-residue protein sequence, read N- to C-terminus: Superoxide dismutase [Cu-Zn] (152 aa).

Cu cation is bound by residues His45, His47, and His62. Cys56 and Cys145 are oxidised to a cystine. The Zn(2+) site is built by His62, His70, His79, and Asp82. Cu cation is bound at residue His119.

It belongs to the Cu-Zn superoxide dismutase family. In terms of assembly, homodimer. Cu cation is required as a cofactor. Zn(2+) serves as cofactor.

The protein localises to the cytoplasm. The catalysed reaction is 2 superoxide + 2 H(+) = H2O2 + O2. Its function is as follows. Destroys radicals which are normally produced within the cells and which are toxic to biological systems. The chain is Superoxide dismutase [Cu-Zn] (SODCC) from Zantedeschia aethiopica (White calla lily).